Reading from the N-terminus, the 456-residue chain is Aromatic amino acid transport protein AroP (456 aa).

Residues 1–18 are Cytoplasmic-facing; the sequence is MEGQQHGEQLKRGLKNRH. Residues 19–39 traverse the membrane as a helical segment; sequence IQLIALGGAIGTGLFLGSASV. Residues 40-41 lie on the Periplasmic side of the membrane; that stretch reads IQ. Residues 42 to 62 form a helical membrane-spanning segment; the sequence is SAGPGIILGYAIAGFIAFLIM. At 63 to 85 the chain is on the cytoplasmic side; that stretch reads RQLGEMVVEEPVAGSFSHFAYKY. Residues 86-106 form a helical membrane-spanning segment; that stretch reads WGSFAGFASGWNYWVLYVLVA. Over 107 to 116 the chain is Periplasmic; it reads MAELTAVGKY. Residues 117–137 traverse the membrane as a helical segment; it reads IQFWYPEIPTWVSAAVFFVVI. Over 138–154 the chain is Cytoplasmic; the sequence is NAINLTNVKVFGEMEFW. A helical membrane pass occupies residues 155-175; the sequence is FAIIKVIAVVAMIIFGAWLLF. Residues 176-200 lie on the Periplasmic side of the membrane; that stretch reads SGNGGPQASVSNLWDQGGFLPHGFT. Residues 201 to 221 form a helical membrane-spanning segment; the sequence is GLVMMMAIIMFSFGGLELVGI. The Cytoplasmic segment spans residues 222–239; sequence TAAEADNPEQSIPKATNQ. Residues 240–260 traverse the membrane as a helical segment; the sequence is VIYRILIFYIGSLAVLLSLMP. The Periplasmic segment spans residues 261-270; it reads WTRVTADTSP. A helical transmembrane segment spans residues 271-291; the sequence is FVLIFHELGDTFVANALNIVV. Topologically, residues 292-332 are cytoplasmic; the sequence is LTAALSVYNSCVYCNSRMLFGLAQQGNAPKALASVDKRGVP. Residues 333–353 form a helical membrane-spanning segment; sequence VNTILVSALVTALCVLINYLA. The Periplasmic segment spans residues 354 to 357; the sequence is PESA. Residues 358-378 form a helical membrane-spanning segment; that stretch reads FGLLMALVVSALVINWAMISL. Residues 379–398 lie on the Cytoplasmic side of the membrane; sequence AHMKFRRAKQEQGVVTRFPA. Residues 399 to 419 traverse the membrane as a helical segment; sequence LLYPLGNWICLLFMAAVLVIM. Over 420–424 the chain is Periplasmic; that stretch reads LMTPG. A helical transmembrane segment spans residues 425-445; it reads MAISVYLIPVWLIVLGIGYLF. Residues 446–456 lie on the Cytoplasmic side of the membrane; that stretch reads KEKTAKAVKAH.

It belongs to the amino acid-polyamine-organocation (APC) superfamily. Amino acid transporter (AAT) (TC 2.A.3.1) family.

Its subcellular location is the cell inner membrane. The catalysed reaction is L-phenylalanine(in) + H(+)(in) = L-phenylalanine(out) + H(+)(out). The enzyme catalyses L-tryptophan(in) + H(+)(in) = L-tryptophan(out) + H(+)(out). It carries out the reaction L-tyrosine(in) + H(+)(in) = L-tyrosine(out) + H(+)(out). In terms of biological role, permease that is involved in the active transport across the cytoplasmic membrane of all three aromatic amino acids, phenylalanine, tyrosine and tryptophan. In Escherichia coli O6:H1 (strain CFT073 / ATCC 700928 / UPEC), this protein is Aromatic amino acid transport protein AroP (aroP).